Consider the following 112-residue polypeptide: T cell receptor alpha variable 34 (112 aa).

The signal sequence occupies residues 1–21 (METVLQVLLGILGFQAAWVSS). An Ig-like domain is found at 22–112 (QELEQSPQSL…HAGIYLCGAD (91 aa)). Residues asparagine 38 and asparagine 42 are each glycosylated (N-linked (GlcNAc...) asparagine). A disulfide bridge links cysteine 43 with cysteine 109.

Alpha-beta TR is a heterodimer composed of an alpha and beta chain; disulfide-linked. The alpha-beta TR is associated with the transmembrane signaling CD3 coreceptor proteins to form the TR-CD3 (TcR or TCR). The assembly of alpha-beta TR heterodimers with CD3 occurs in the endoplasmic reticulum where a single alpha-beta TR heterodimer associates with one CD3D-CD3E heterodimer, one CD3G-CD3E heterodimer and one CD247 homodimer forming a stable octameric structure. CD3D-CD3E and CD3G-CD3E heterodimers preferentially associate with TR alpha and TR beta chains, respectively. The association of the CD247 homodimer is the last step of TcR assembly in the endoplasmic reticulum and is required for transport to the cell surface.

The protein localises to the cell membrane. Its function is as follows. V region of the variable domain of T cell receptor (TR) alpha chain that participates in the antigen recognition. Alpha-beta T cell receptors are antigen specific receptors which are essential to the immune response and are present on the cell surface of T lymphocytes. Recognize peptide-major histocompatibility (MH) (pMH) complexes that are displayed by antigen presenting cells (APC), a prerequisite for efficient T cell adaptive immunity against pathogens. Binding of alpha-beta TR to pMH complex initiates TR-CD3 clustering on the cell surface and intracellular activation of LCK that phosphorylates the ITAM motifs of CD3G, CD3D, CD3E and CD247 enabling the recruitment of ZAP70. In turn ZAP70 phosphorylates LAT, which recruits numerous signaling molecules to form the LAT signalosome. The LAT signalosome propagates signal branching to three major signaling pathways, the calcium, the mitogen-activated protein kinase (MAPK) kinase and the nuclear factor NF-kappa-B (NF-kB) pathways, leading to the mobilization of transcription factors that are critical for gene expression and essential for T cell growth and differentiation. The T cell repertoire is generated in the thymus, by V-(D)-J rearrangement. This repertoire is then shaped by intrathymic selection events to generate a peripheral T cell pool of self-MH restricted, non-autoaggressive T cells. Post-thymic interaction of alpha-beta TR with the pMH complexes shapes TR structural and functional avidity. This Homo sapiens (Human) protein is T cell receptor alpha variable 34.